The primary structure comprises 490 residues: Probable malate:quinone oxidoreductase (490 aa).

Belongs to the MQO family. FAD serves as cofactor.

The catalysed reaction is (S)-malate + a quinone = a quinol + oxaloacetate. Its pathway is carbohydrate metabolism; tricarboxylic acid cycle; oxaloacetate from (S)-malate (quinone route): step 1/1. This chain is Probable malate:quinone oxidoreductase, found in Corynebacterium jeikeium (strain K411).